Consider the following 78-residue polypeptide: DNA-directed RNA polymerase subunit Rpo5 (78 aa).

It belongs to the archaeal Rpo5/eukaryotic RPB5 RNA polymerase subunit family. Part of the RNA polymerase complex.

Its subcellular location is the cytoplasm. It catalyses the reaction RNA(n) + a ribonucleoside 5'-triphosphate = RNA(n+1) + diphosphate. DNA-dependent RNA polymerase (RNAP) catalyzes the transcription of DNA into RNA using the four ribonucleoside triphosphates as substrates. This is DNA-directed RNA polymerase subunit Rpo5 from Methanosarcina barkeri (strain Fusaro / DSM 804).